The following is a 529-amino-acid chain: Bifunctional purine biosynthesis protein PurH (529 aa).

In terms of domain architecture, MGS-like spans 1-148 (MQQRRPIRRA…KNHKDVAIVV (148 aa)).

It belongs to the PurH family.

The enzyme catalyses (6R)-10-formyltetrahydrofolate + 5-amino-1-(5-phospho-beta-D-ribosyl)imidazole-4-carboxamide = 5-formamido-1-(5-phospho-D-ribosyl)imidazole-4-carboxamide + (6S)-5,6,7,8-tetrahydrofolate. It carries out the reaction IMP + H2O = 5-formamido-1-(5-phospho-D-ribosyl)imidazole-4-carboxamide. Its pathway is purine metabolism; IMP biosynthesis via de novo pathway; 5-formamido-1-(5-phospho-D-ribosyl)imidazole-4-carboxamide from 5-amino-1-(5-phospho-D-ribosyl)imidazole-4-carboxamide (10-formyl THF route): step 1/1. It participates in purine metabolism; IMP biosynthesis via de novo pathway; IMP from 5-formamido-1-(5-phospho-D-ribosyl)imidazole-4-carboxamide: step 1/1. In Yersinia pseudotuberculosis serotype O:1b (strain IP 31758), this protein is Bifunctional purine biosynthesis protein PurH.